Here is a 610-residue protein sequence, read N- to C-terminus: Chaperone protein DnaK (610 aa).

Thr173 carries the post-translational modification Phosphothreonine; by autocatalysis. Disordered regions lie at residues 525–544 (ENIGEEDKKSAEEKKDALKT) and 576–610 (AAQQQQQAQGANAGQNNDSTVEDAEFKEVKDDDKK). Residues 529 to 542 (EEDKKSAEEKKDAL) show a composition bias toward basic and acidic residues. Over residues 576-592 (AAQQQQQAQGANAGQNN) the composition is skewed to low complexity. Residues 599 to 610 (AEFKEVKDDDKK) show a composition bias toward basic and acidic residues.

Belongs to the heat shock protein 70 family.

Acts as a chaperone. This chain is Chaperone protein DnaK, found in Staphylococcus aureus (strain Mu3 / ATCC 700698).